The sequence spans 438 residues: Aspartate--tRNA(Asp/Asn) ligase (438 aa).

Glu-176 is an L-aspartate binding site. An aspartate region spans residues 198–201; it reads QLYK. Arg-220 is an L-aspartate binding site. Residues 220 to 222, 228 to 230, and Glu-361 contribute to the ATP site; these read RAE and RHL. Residues Glu-361 and Ser-364 each coordinate Mg(2+). Positions 364 and 368 each coordinate L-aspartate. 409–412 contributes to the ATP binding site; the sequence is GADR.

The protein belongs to the class-II aminoacyl-tRNA synthetase family. Type 2 subfamily. As to quaternary structure, homodimer. Mg(2+) is required as a cofactor.

It is found in the cytoplasm. The catalysed reaction is tRNA(Asx) + L-aspartate + ATP = L-aspartyl-tRNA(Asx) + AMP + diphosphate. In terms of biological role, aspartyl-tRNA synthetase with relaxed tRNA specificity since it is able to aspartylate not only its cognate tRNA(Asp) but also tRNA(Asn). Reaction proceeds in two steps: L-aspartate is first activated by ATP to form Asp-AMP and then transferred to the acceptor end of tRNA(Asp/Asn). This chain is Aspartate--tRNA(Asp/Asn) ligase, found in Methanococcus maripaludis (strain C5 / ATCC BAA-1333).